We begin with the raw amino-acid sequence, 188 residues long: Elongation factor P (188 aa).

The protein belongs to the elongation factor P family.

Its subcellular location is the cytoplasm. The protein operates within protein biosynthesis; polypeptide chain elongation. Its function is as follows. Involved in peptide bond synthesis. Stimulates efficient translation and peptide-bond synthesis on native or reconstituted 70S ribosomes in vitro. Probably functions indirectly by altering the affinity of the ribosome for aminoacyl-tRNA, thus increasing their reactivity as acceptors for peptidyl transferase. The protein is Elongation factor P of Azotobacter vinelandii (strain DJ / ATCC BAA-1303).